A 208-amino-acid polypeptide reads, in one-letter code: MARYRGAVERLERRFGVSLALKGERRLSGKSALDKRAYGPGQHGQRRAKTSDYGLQLKEKQKAKMMYGISEKQFRSIFVEANRLDGNTGENLIRLIERRLDNVVYRMGFATTRSSARQLVTHGHVLVDGKRLDIPSYFVRSGQKIEIKEKTKSNPQVVRATELTAQTGIVPWIDVEKDKKYGIFTRYPEREEVVVPIEERLIVELYSK.

The disordered stretch occupies residues 31-51 (SALDKRAYGPGQHGQRRAKTS). Residues 98 to 156 (RRLDNVVYRMGFATTRSSARQLVTHGHVLVDGKRLDIPSYFVRSGQKIEIKEKTKSNPQ) form the S4 RNA-binding domain.

The protein belongs to the universal ribosomal protein uS4 family. Part of the 30S ribosomal subunit. Contacts protein S5. The interaction surface between S4 and S5 is involved in control of translational fidelity.

Its function is as follows. One of the primary rRNA binding proteins, it binds directly to 16S rRNA where it nucleates assembly of the body of the 30S subunit. With S5 and S12 plays an important role in translational accuracy. This is Small ribosomal subunit protein uS4 from Helicobacter pylori (strain HPAG1).